The sequence spans 70 residues: Small ribosomal subunit protein bS21 (70 aa).

This sequence belongs to the bacterial ribosomal protein bS21 family.

This is Small ribosomal subunit protein bS21 from Bordetella avium (strain 197N).